Consider the following 479-residue polypeptide: M-phase inducer phosphatase (479 aa).

The tract at residues 182–218 (MTESNTNSTTTPPPKTPETARDCFKRPEPPASANCSP) is disordered. Residues 199-209 (ETARDCFKRPE) show a composition bias toward basic and acidic residues. The Rhodanese domain occupies 316 to 432 (KVASYRIIDC…FFESHVELCE (117 aa)). The active site involves Cys-379. Ser-455 carries the post-translational modification Phosphoserine.

The protein belongs to the MPI phosphatase family.

It catalyses the reaction O-phospho-L-tyrosyl-[protein] + H2O = L-tyrosyl-[protein] + phosphate. Functionally, this protein functions as a dosage-dependent inducer in mitotic control. It is a tyrosine protein phosphatase required for progression of the cell cycle. It may directly dephosphorylate Cdk1 and activate the Cdk1 activity. The chain is M-phase inducer phosphatase (stg) from Drosophila melanogaster (Fruit fly).